Consider the following 230-residue polypeptide: 2,3-bisphosphoglycerate-dependent phosphoglycerate mutase (230 aa).

Substrate is bound by residues 8-15, 21-22, Arg60, 87-90, Lys98, 114-115, and 183-184; these read RHGESEWN, TG, ERHY, RR, and GN. The active-site Tele-phosphohistidine intermediate is the His9. Catalysis depends on Glu87, which acts as the Proton donor/acceptor.

Belongs to the phosphoglycerate mutase family. BPG-dependent PGAM subfamily.

It catalyses the reaction (2R)-2-phosphoglycerate = (2R)-3-phosphoglycerate. It participates in carbohydrate degradation; glycolysis; pyruvate from D-glyceraldehyde 3-phosphate: step 3/5. Its function is as follows. Catalyzes the interconversion of 2-phosphoglycerate and 3-phosphoglycerate. The chain is 2,3-bisphosphoglycerate-dependent phosphoglycerate mutase from Streptococcus mutans serotype c (strain ATCC 700610 / UA159).